Consider the following 142-residue polypeptide: Small ribosomal subunit protein bS6 (142 aa).

Residues 96–142 are disordered; the sequence is VTGQSEMLKAEENRSERRERRERPEHDGSADGDDSDSDSDNSDNADE. Over residues 103–124 the composition is skewed to basic and acidic residues; that stretch reads LKAEENRSERRERRERPEHDGS. Residues 125–142 show a composition bias toward acidic residues; the sequence is ADGDDSDSDSDNSDNADE.

This sequence belongs to the bacterial ribosomal protein bS6 family.

Its function is as follows. Binds together with bS18 to 16S ribosomal RNA. The protein is Small ribosomal subunit protein bS6 of Pseudomonas fluorescens (strain Pf0-1).